The following is a 142-amino-acid chain: Large ribosomal subunit protein uL13 (142 aa).

The protein belongs to the universal ribosomal protein uL13 family. In terms of assembly, part of the 50S ribosomal subunit.

This protein is one of the early assembly proteins of the 50S ribosomal subunit, although it is not seen to bind rRNA by itself. It is important during the early stages of 50S assembly. This chain is Large ribosomal subunit protein uL13, found in Opitutus terrae (strain DSM 11246 / JCM 15787 / PB90-1).